The primary structure comprises 115 residues: Large ribosomal subunit protein bL19 (115 aa).

The protein belongs to the bacterial ribosomal protein bL19 family.

This protein is located at the 30S-50S ribosomal subunit interface and may play a role in the structure and function of the aminoacyl-tRNA binding site. The polypeptide is Large ribosomal subunit protein bL19 (Nitratidesulfovibrio vulgaris (strain ATCC 29579 / DSM 644 / CCUG 34227 / NCIMB 8303 / VKM B-1760 / Hildenborough) (Desulfovibrio vulgaris)).